Consider the following 249-residue polypeptide: Segregation and condensation protein A (249 aa).

The protein belongs to the ScpA family. Component of a cohesin-like complex composed of ScpA, ScpB and the Smc homodimer, in which ScpA and ScpB bind to the head domain of Smc. The presence of the three proteins is required for the association of the complex with DNA.

The protein localises to the cytoplasm. In terms of biological role, participates in chromosomal partition during cell division. May act via the formation of a condensin-like complex containing Smc and ScpB that pull DNA away from mid-cell into both cell halves. The chain is Segregation and condensation protein A from Listeria monocytogenes serotype 4b (strain CLIP80459).